The chain runs to 359 residues: 3-dehydroquinate synthase (359 aa).

NAD(+) is bound by residues 71-76, 105-109, 129-130, Lys-142, and Lys-151; these read DGEAYK, GVVGD, and TT. Residues Glu-184, His-247, and His-264 each coordinate Zn(2+).

This sequence belongs to the sugar phosphate cyclases superfamily. Dehydroquinate synthase family. It depends on Co(2+) as a cofactor. Zn(2+) is required as a cofactor. The cofactor is NAD(+).

It localises to the cytoplasm. The catalysed reaction is 7-phospho-2-dehydro-3-deoxy-D-arabino-heptonate = 3-dehydroquinate + phosphate. It participates in metabolic intermediate biosynthesis; chorismate biosynthesis; chorismate from D-erythrose 4-phosphate and phosphoenolpyruvate: step 2/7. In terms of biological role, catalyzes the conversion of 3-deoxy-D-arabino-heptulosonate 7-phosphate (DAHP) to dehydroquinate (DHQ). This is 3-dehydroquinate synthase from Burkholderia orbicola (strain MC0-3).